The sequence spans 435 residues: E3 ubiquitin-protein ligase PUB22 (435 aa).

Residues Glu6 to Tyr81 enclose the U-box domain.

In terms of assembly, interacts with RPN12A. Binds to EXO70B2. Post-translationally, auto-ubiquitinated leading to degradation via the 26S proteasome. This Auto-ubiquitination is repressed by the bacterial elicitor flg22 thus leading to a transiently increased protein stabilization and accumulation.

It localises to the cytoplasm. The enzyme catalyses S-ubiquitinyl-[E2 ubiquitin-conjugating enzyme]-L-cysteine + [acceptor protein]-L-lysine = [E2 ubiquitin-conjugating enzyme]-L-cysteine + N(6)-ubiquitinyl-[acceptor protein]-L-lysine.. Its pathway is protein modification; protein ubiquitination. Functionally, E3 ubiquitin-protein ligase that negatively regulates water stress response. May control in coordination with PUB23 a drought signaling pathway by ubiquitinating cytosolic RPN12a. Acts as a negative regulator of the immunity triggered by the pathogen-associated molecular patterns (PAMPs), in association with PUB23 and PUB24. Regulates EXO70B2 ubiquitination and degradation via the 26S proteasome to attenuate PAMP-induced signaling. This Arabidopsis thaliana (Mouse-ear cress) protein is E3 ubiquitin-protein ligase PUB22.